Consider the following 210-residue polypeptide: Viral protein 1 (210 aa).

This chain is Viral protein 1, found in Chaetoceros (Chaetoceros sp. DNA virus 7).